A 491-amino-acid polypeptide reads, in one-letter code: MRRDINNFLFGERMELFEILKQKIKEKEVITPKEMAIIDDNAEFLGIQKILLMENAGKAVYEEIKDIDAEEFIIFCGTGNNGGDGFVVARHLGKGDVILIGKESEIKTYEARENFKILKNLAEFGNIRIREIKWAEEVNDIFERLKNKKAVIIDAMIGTGVKGELREPFKTIVDKINELKQINKNIFVISVDVETGHLESDLTITFHKRKTINKDNAIVKKIGIPKEAEYIVGWGDLKALRKRDSNSHKGQNGKVLIIGGSKDFYGAPILAGLAALKIVDLVGILSVGKVIDKVNHPEFIMYRVEGDYLSSQHVDYTLEIAKKYDVVVLGNGLGANNRTKAFLNEFLAKYDGKVVIDADAIKVIDYNNFEFSENYIFTPHKREFEYMGIDLDNIENIKSTIVLKGKYDIIFNANNLKINKTGNAGLTKGGTGDVLAGLIGALFAVNEAFLSACCGAFINGYAGDLLLKEKGYYYTPLDLIEKIPNVLKIFQ.

An NAD(P)H-hydrate epimerase region spans residues M1 to Y230. A YjeF N-terminal domain is found at M35–Y230. The segment at N80–D84 is NADPHX 1; for epimerase activity. K(+) is bound by residues N81 and D154. The segment at G158–E164 is NADPHX 1; for epimerase activity. D192 is a (6S)-NADPHX binding site. Position 195 (T195) interacts with K(+). In terms of domain architecture, YjeF C-terminal spans V232 to F490. An ADP-dependent (S)-NAD(P)H-hydrate dehydratase region spans residues V232–Q491. Residue G332 participates in (6S)-NADPHX binding. The tract at residues H380 to Y386 is NADPHX 2; for dehydratase activity. Residues K404–D408 and N423–G432 contribute to the ADP site. (6S)-NADPHX is bound at residue D433.

The protein in the N-terminal section; belongs to the NnrE/AIBP family. In the C-terminal section; belongs to the NnrD/CARKD family. K(+) is required as a cofactor.

It carries out the reaction (6S)-NADHX + ADP = AMP + phosphate + NADH + H(+). The enzyme catalyses (6S)-NADPHX + ADP = AMP + phosphate + NADPH + H(+). It catalyses the reaction (6R)-NADHX = (6S)-NADHX. The catalysed reaction is (6R)-NADPHX = (6S)-NADPHX. Bifunctional enzyme that catalyzes the epimerization of the S- and R-forms of NAD(P)HX and the dehydration of the S-form of NAD(P)HX at the expense of ADP, which is converted to AMP. This allows the repair of both epimers of NAD(P)HX, a damaged form of NAD(P)H that is a result of enzymatic or heat-dependent hydration. The polypeptide is Bifunctional NAD(P)H-hydrate repair enzyme Nnr (nnr) (Methanocaldococcus jannaschii (strain ATCC 43067 / DSM 2661 / JAL-1 / JCM 10045 / NBRC 100440) (Methanococcus jannaschii)).